Reading from the N-terminus, the 346-residue chain is Glycerol-1-phosphate dehydrogenase [NAD(P)+] (346 aa).

NAD(+)-binding positions include 93 to 97 (GTIID) and 115 to 118 (TTAS). Aspartate 120 contributes to the substrate binding site. An NAD(+)-binding site is contributed by serine 124. Aspartate 167 contributes to the substrate binding site. 2 residues coordinate Zn(2+): aspartate 167 and histidine 247. Histidine 251 lines the substrate pocket. Residue histidine 263 coordinates Zn(2+).

This sequence belongs to the glycerol-1-phosphate dehydrogenase family. Zn(2+) serves as cofactor.

Its subcellular location is the cytoplasm. It catalyses the reaction sn-glycerol 1-phosphate + NAD(+) = dihydroxyacetone phosphate + NADH + H(+). The enzyme catalyses sn-glycerol 1-phosphate + NADP(+) = dihydroxyacetone phosphate + NADPH + H(+). Its pathway is membrane lipid metabolism; glycerophospholipid metabolism. Functionally, catalyzes the NAD(P)H-dependent reduction of dihydroxyacetonephosphate (DHAP or glycerone phosphate) to glycerol 1-phosphate (G1P). The G1P thus generated is used as the glycerophosphate backbone of phospholipids in the cellular membranes of Archaea. The protein is Glycerol-1-phosphate dehydrogenase [NAD(P)+] of Pyrococcus furiosus (strain ATCC 43587 / DSM 3638 / JCM 8422 / Vc1).